The chain runs to 389 residues: 5-amino-6-(D-ribitylamino)uracil--L-tyrosine 4-hydroxyphenyl transferase (389 aa).

One can recognise a Radical SAM core domain in the interval Val56–Arg298. Residues Cys70, Cys74, and Cys77 each contribute to the [4Fe-4S] cluster site.

It belongs to the radical SAM superfamily. CofH family. Consists of two subunits, CofG and CofH. [4Fe-4S] cluster serves as cofactor.

It catalyses the reaction 5-amino-6-(D-ribitylamino)uracil + L-tyrosine + S-adenosyl-L-methionine = 5-amino-5-(4-hydroxybenzyl)-6-(D-ribitylimino)-5,6-dihydrouracil + 2-iminoacetate + 5'-deoxyadenosine + L-methionine + H(+). The protein operates within cofactor biosynthesis; coenzyme F0 biosynthesis. Its function is as follows. Catalyzes the radical-mediated synthesis of 5-amino-5-(4-hydroxybenzyl)-6-(D-ribitylimino)-5,6-dihydrouracil from 5-amino-6-(D-ribitylamino)uracil and L-tyrosine. The sequence is that of 5-amino-6-(D-ribitylamino)uracil--L-tyrosine 4-hydroxyphenyl transferase from Gloeobacter violaceus (strain ATCC 29082 / PCC 7421).